Consider the following 398-residue polypeptide: ATP-dependent RNA helicase eIF4A (398 aa).

The Q motif signature appears at 25-53 (DSFDAMNLRAELLRGVYAYGFERPSAIQQ). The Helicase ATP-binding domain occupies 56 to 226 (IMPVIKGSDV…TKFMRDPVRI (171 aa)). Residue 69–76 (AQSGTGKT) coordinates ATP. The short motif at 174 to 177 (DEAD) is the DEAD box element. In terms of domain architecture, Helicase C-terminal spans 237–398 (GIKQFYIAVE…EMPMNVADLI (162 aa)).

It belongs to the DEAD box helicase family. eIF4A subfamily. As to quaternary structure, component of the eIF4F complex, which composition varies with external and internal environmental conditions. It is composed of at least eIF4A, eIF4E and eIF4G.

The protein resides in the cytoplasm. It carries out the reaction ATP + H2O = ADP + phosphate + H(+). In terms of biological role, ATP-dependent RNA helicase which is a subunit of the eIF4F complex involved in cap recognition and is required for mRNA binding to ribosome. In the current model of translation initiation, eIF4A unwinds RNA secondary structures in the 5'-UTR of mRNAs which is necessary to allow efficient binding of the small ribosomal subunit, and subsequent scanning for the initiator codon. In Coccidioides immitis (strain RS) (Valley fever fungus), this protein is ATP-dependent RNA helicase eIF4A (TIF1).